We begin with the raw amino-acid sequence, 150 residues long: Leukotriene C4 synthase (150 aa).

At 1 to 6 (MKDEVA) the chain is on the cytoplasmic side. Residues 7–27 (LLATVTLLGVLLQAYFSLQVI) traverse the membrane as a helical segment. Topologically, residues 28 to 48 (RARRAHRVSPPLTTGPPEFER) are lumenal. Arg30 is a glutathione binding site. Residue Arg31 is the Proton donor of the active site. Ser36 carries the post-translational modification Phosphoserine. The chain crosses the membrane as a helical span at residues 49-69 (VYRAQVNCSEYFPLFLATLWV). Glutathione-binding positions include 51 to 55 (RAQVN) and 58 to 59 (EY). The Cytoplasmic segment spans residues 70–73 (AGVY). Residues 74 to 94 (FHEGAAALCGLVYLFTRLRYF) form a helical membrane-spanning segment. 93 to 97 (YFWGY) contributes to the glutathione binding site. The Lumenal segment spans residues 95-104 (WGYARSAQLR). Arg104 functions as the Proton acceptor in the catalytic mechanism. Residues 105–124 (LAPLYASARALWLLLALATL) form a helical membrane-spanning segment. At 125 to 150 (GLLAHFLPAAARAALLRLLRALLRTA) the chain is on the cytoplasmic side.

It belongs to the MAPEG family. In terms of assembly, homotrimer. Interacts with ALOX5AP and ALOX5. Phosphorylation at Ser-36 by RPS6KB1 inhibits the leukotriene-C4 synthase activity.

Its subcellular location is the nucleus outer membrane. The protein resides in the endoplasmic reticulum membrane. The protein localises to the nucleus membrane. The enzyme catalyses leukotriene C4 = leukotriene A4 + glutathione. It catalyses the reaction (13S,14S)-epoxy-(4Z,7Z,9E,11E,16Z,19Z)-docosahexaenoate + glutathione = (13R)-S-glutathionyl-(14S)-hydroxy-(4Z,7Z,9E,11E,16Z,19Z)-docosahexaenoate. Its pathway is lipid metabolism; leukotriene C4 biosynthesis. Inhibited by MK886. Its function is as follows. Catalyzes the conjugation of leukotriene A4 with reduced glutathione (GSH) to form leukotriene C4 with high specificity. Can also catalyze the transfer of a glutathionyl group from glutathione (GSH) to 13(S),14(S)-epoxy-docosahexaenoic acid to form maresin conjugate in tissue regeneration 1 (MCTR1), a bioactive lipid mediator that possess potent anti-inflammatory and proresolving actions. This is Leukotriene C4 synthase (LTC4S) from Cavia porcellus (Guinea pig).